A 681-amino-acid polypeptide reads, in one-letter code: Transmembrane protein 214-A (681 aa).

Disordered stretches follow at residues 1 to 41 and 58 to 99; these read MASG…GTAP and KKQN…GSRQ. 2 N-linked (GlcNAc...) asparagine glycosylation sites follow: Asn300 and Asn324. Transmembrane regions (helical) follow at residues 471–491 and 608–628; these read GFPW…FVFY and LLLH…EAAV.

The protein belongs to the TMEM214 family. As to quaternary structure, constitutively interacts with CASP4; required for the localization of procaspase 4 to the ER.

The protein localises to the endoplasmic reticulum membrane. In terms of biological role, critical mediator, in cooperation with CASP4, of endoplasmic reticulum-stress induced apoptosis. Required or the activation of CASP4 following endoplasmic reticulum stress. This chain is Transmembrane protein 214-A (tmem214-a), found in Xenopus laevis (African clawed frog).